We begin with the raw amino-acid sequence, 1463 residues long: MESHMFSVQQIQPNVISVRLFKRKVGGLGFLVKERVSKPPVIISDLIRGGAAEQSGLIQAGDIILAVNGQPLVDLSYDSALEVLRGIASETHVVLILRGPEGFTTHLETTFTGDGTPKTIRVTRPGRVTPPPDAPAGREQPRAVDGAPGPGNGPQHAPDPGQEASSLAQANGLAARPPGQDPAKKSTGVALQGSGENNKLLKEIEPVLNLLTSGGKAINGGGPAKTETKDVEVQVDRDPDSKSHKPLPLGVENDRVFNDLWGKGNMPVVLNNPYSEKEQPSASGKQSPTKNGSPSKCPRFLKVKNWETDVVLSDTLHLKSTLGTGCTEHICMGSVMLPSQQIRKPEDVRTKEQLFPLAKEFIDQYYSSIKRFGSKAHMERLEEVNKEIETTSTYQLKDTELIYGAKHAWRNASRCVGRIQWSKLQVFDARDCTTAHGMFNYICNHIKYATNKGNLRSAITIFPQRTDGKHDFRVWNSQLIRYAGYKQPDGSILGDPANVEFTEICIQQGWKPPRSRFDVLPLLLQANGNDPELFQIPPELVLEVPIRHPKFEWFKDLGLKWYGLPAVSNMLLEIGGLEFSACPFSGWYMGTEIGVRDYCDSSRYNILEDVAKKMNLDMRKTSSLWKDQALVEINIAVLYSFQSDKVTIVDHHSATESFIKHMENEYRCRGGCPADWVWIVPPMSGSITPVFHQEMLNYRLTPSFEYQPDPWNTHVWKGTNGTPTKRRAIGFKKLAEAVKFSAKLMGQAMAKRVKATILYATETGKSQAYAKTLCEIFKHAFDAKVMSMEEYDIVHLEHETLVLVVTSTFGNGDPPENGEKFGCALMEMRNPNSVHEERKYPEPLRFFPRKGPPLSRGDTEVHGLAAVRDSQLRSYKVRFNSVSSYSDSRKSSGDGPDLRDNFESTGPLANVRFSVFGLGSRAYPHFCAFGHAVDTLLEELGGERILKMREGDELCGQEEAFRTWAKKVFKAACDVFCVGDDVNIEKANNSLISNDRSWKRNKFRLTYVAEAPELTQGLSNVHKKRVSAARLLSRQNLQSPKSSRSTIFVRLHTNGNQELQYQPGDHLGVFPGNHEDLVNALIERLEDAPPANQLVKVELLEERNTALGVISNWTDEHRLPPCTIFQAFKYYLDITTPPTPLQLQQFASLATSEKERQRLLVLSKGLQEYEEWKWGKNPTIVEVLEEFPSIQMPSTLLLTQLSLLQPRYYSISSSPDMYPDEVHLTVAIVSYRTRDGEGPIHHGVCSSWLNRIQADEVVPCFVRGAPSFHLPQNPQVPCILVGPGTGIAPFRSFWQQRQFDIQHKGMSPCPMVLVFGCRQSKIDHIYREEALQAKSKGVFRELYTAYSREPDKPKKYVQDILQEQLAEPVYRALKEQGGHIYVCGDVTMAADVLKAIQRIMTQKGKLSVEDAGVFISRLRDDNRYHEDIFGVTLRTYEVTNRLRSESIAFIEESKKDTDEVFSS.

The interval 1-200 is interaction with NOSIP; it reads MESHMFSVQQ…LQGSGENNKL (200 aa). One can recognise a PDZ domain in the interval 17–99; sequence SVRLFKRKVG…ETHVVLILRG (83 aa). Disordered stretches follow at residues 110–194, 215–250, and 268–298; these read TFTG…LQGS, GKAI…LPLG, and VVLN…SKCP. The segment at 158–240 is DYNLL1/PIN/nNOS-inhibiting protein-binding; sequence PDPGQEASSL…VEVQVDRDPD (83 aa). The span at 226–243 shows a compositional bias: basic and acidic residues; that stretch reads TETKDVEVQVDRDPDSKS. Over residues 280 to 294 the composition is skewed to polar residues; it reads PSASGKQSPTKNGSP. Residue Ser334 participates in (6R)-L-erythro-5,6,7,8-tetrahydrobiopterin binding. Residue Cys415 participates in heme b binding. L-arginine-binding residues include Gln478, Trp587, Tyr588, and Glu592. Val677, Trp678, and Phe691 together coordinate (6R)-L-erythro-5,6,7,8-tetrahydrobiopterin. Position 706 (Tyr706) interacts with heme b. The interval 725–745 is calmodulin-binding; sequence KRRAIGFKKLAEAVKFSAKLM. Residues 755–969 enclose the Flavodoxin-like domain; the sequence is ATILYATETG…AFRTWAKKVF (215 aa). The FMN site is built by Thr761, Glu762, Thr763, Lys765, Ser766, Ser807, Thr808, and Gly812. 3 positions are modified to phosphoserine: Ser881, Ser891, and Ser892. Ser920, His925, Cys927, Glu953, and Gln957 together coordinate FMN. Positions 1024-1271 constitute an FAD-binding FR-type domain; sequence KRVSAARLLS…VRGAPSFHLP (248 aa). Arg1044 is an NADP(+) binding site. His1066, Arg1207, Tyr1208, Tyr1209, Ser1210, Thr1225, and Ala1227 together coordinate FAD. Residue Ser1230 coordinates NADP(+). Residues Tyr1231, Val1244, Cys1245, and Ser1246 each coordinate FAD. 10 residues coordinate NADP(+): Thr1285, Arg1318, Ser1347, Arg1348, Lys1354, Tyr1356, Gln1358, Asp1391, Thr1432, and Arg1434.

This sequence belongs to the NOS family. As to quaternary structure, homodimer. Interacts with DLG4; the interaction possibly being prevented by the association between NOS1 and CAPON. Forms a ternary complex with CAPON and RASD1. Forms a ternary complex with CAPON and SYN1. Interacts with ZDHHC23. Interacts with NOSIP; which may impair its synaptic location. Interacts with HTR4. Interacts with SLC6A4. Interacts with VAC14. Interacts (via N-terminal domain) with DLG4 (via N-terminal tandem pair of PDZ domains). Interacts with SLC6A4. Forms a complex with ASL, ASS1 and SLC7A1; the complex regulates cell-autonomous L-arginine synthesis and citrulline recycling while channeling extracellular L-arginine to nitric oxide synthesis pathway. Interacts with DMD; localizes NOS1 to sarcolemma in muscle cells. Interacts with DYNLL1; inhibits the nitric oxide synthase activity. Requires heme b as cofactor. The cofactor is FAD. FMN is required as a cofactor. (6R)-L-erythro-5,6,7,8-tetrahydrobiopterin serves as cofactor. Post-translationally, ubiquitinated; mediated by STUB1/CHIP in the presence of Hsp70 and Hsp40 (in vitro).

The protein localises to the cell membrane. The protein resides in the sarcolemma. Its subcellular location is the cell projection. It localises to the dendritic spine. The enzyme catalyses 2 L-arginine + 3 NADPH + 4 O2 + H(+) = 2 L-citrulline + 2 nitric oxide + 3 NADP(+) + 4 H2O. With respect to regulation, stimulated by calcium/calmodulin. Inhibited by DYNLL1 that prevents the dimerization of the protein. Inhibited by NOSIP. In terms of biological role, produces nitric oxide (NO) which is a messenger molecule with diverse functions throughout the body. In the brain and peripheral nervous system, NO displays many properties of a neurotransmitter. Probably has nitrosylase activity and mediates cysteine S-nitrosylation of cytoplasmic target proteins such SRR. In Ovis aries (Sheep), this protein is Nitric oxide synthase 1 (NOS1).